The following is a 210-amino-acid chain: Guanylate kinase (210 aa).

One can recognise a Guanylate kinase-like domain in the interval 6–184 (GTLYIISAPS…ALQDLKCIIQ (179 aa)). 13–20 (APSGAGKT) provides a ligand contact to ATP.

It belongs to the guanylate kinase family.

The protein localises to the cytoplasm. The catalysed reaction is GMP + ATP = GDP + ADP. Essential for recycling GMP and indirectly, cGMP. The protein is Guanylate kinase of Nitrosospira multiformis (strain ATCC 25196 / NCIMB 11849 / C 71).